Here is a 166-residue protein sequence, read N- to C-terminus: Phosphopantetheine adenylyltransferase (166 aa).

Thr-10 serves as a coordination point for substrate. ATP is bound by residues 10–11 (TF) and His-18. Residues Lys-42, Leu-74, and Arg-88 each coordinate substrate. ATP is bound by residues 89–91 (GLR), Glu-99, and 124–130 (NSFISSS).

The protein belongs to the bacterial CoaD family. As to quaternary structure, homohexamer. Mg(2+) is required as a cofactor.

It is found in the cytoplasm. The enzyme catalyses (R)-4'-phosphopantetheine + ATP + H(+) = 3'-dephospho-CoA + diphosphate. It participates in cofactor biosynthesis; coenzyme A biosynthesis; CoA from (R)-pantothenate: step 4/5. In terms of biological role, reversibly transfers an adenylyl group from ATP to 4'-phosphopantetheine, yielding dephospho-CoA (dPCoA) and pyrophosphate. The polypeptide is Phosphopantetheine adenylyltransferase (Idiomarina loihiensis (strain ATCC BAA-735 / DSM 15497 / L2-TR)).